A 75-amino-acid polypeptide reads, in one-letter code: MKRDRGRRKKKICSFCVDKIAVIDYKDTPRLKKYITERGKILPRRITGNCAHHQRMLTVSIKRSRHMALLPFSTD.

It belongs to the bacterial ribosomal protein bS18 family. In terms of assembly, part of the 30S ribosomal subunit. Forms a tight heterodimer with protein bS6.

Binds as a heterodimer with protein bS6 to the central domain of the 16S rRNA, where it helps stabilize the platform of the 30S subunit. This is Small ribosomal subunit protein bS18 from Desulforudis audaxviator (strain MP104C).